Consider the following 325-residue polypeptide: Aerobic respiration control sensor protein ArcB homolog (325 aa).

Over 1 to 26 (MKNFKYFAQSYVDWVIRLGRLRFSLL) the chain is Cytoplasmic. A helical membrane pass occupies residues 27 to 47 (GVMILAVLALCTQILFSLFIV). Residues 48 to 57 (HQISWVDIFR) lie on the Periplasmic side of the membrane. A helical membrane pass occupies residues 58-78 (SVTFGLLTAPFVIYFFTLLVE). At 79–325 (KLEHSRLDLS…AQLMGRGFNS (247 aa)) the chain is on the cytoplasmic side. Positions 128-325 (TISHEFRTPL…AQLMGRGFNS (198 aa)) constitute a Histidine kinase domain. Position 131 is a phosphohistidine; by autocatalysis (histidine 131).

The protein resides in the cell inner membrane. The catalysed reaction is ATP + protein L-histidine = ADP + protein N-phospho-L-histidine.. Functionally, member of the two-component regulatory system ArcB/ArcA. Activates ArcA by phosphorylation. In Haemophilus influenzae (strain ATCC 51907 / DSM 11121 / KW20 / Rd), this protein is Aerobic respiration control sensor protein ArcB homolog (arcB).